We begin with the raw amino-acid sequence, 131 residues long: MKLGAYYKGGDLKKPSGGKKRKVRRTKKKALGGGPPQIPKLGEEDVRIVERVRGGNIKVRLREAKYANVYIPKEKRYVKAKILSIVETPANPDFARRNYMVKGAVIRTEVGKAVITSQPGQDGIINAILIE.

The disordered stretch occupies residues 1 to 38; sequence MKLGAYYKGGDLKKPSGGKKRKVRRTKKKALGGGPPQI. The span at 16–30 shows a compositional bias: basic residues; sequence SGGKKRKVRRTKKKA.

The protein belongs to the eukaryotic ribosomal protein eS8 family. In terms of assembly, part of the 30S ribosomal subunit.

This is Small ribosomal subunit protein eS8 from Pyrobaculum arsenaticum (strain DSM 13514 / JCM 11321 / PZ6).